The following is a 410-amino-acid chain: Acetate kinase (410 aa).

Mg(2+) is bound at residue Asn7. ATP is bound at residue Lys14. Arg88 contributes to the substrate binding site. Residue Asp145 is the Proton donor/acceptor of the active site. ATP-binding positions include 203–207 (HAGNG), 278–280 (DTR), and 326–330 (GIGEN). Position 379 (Glu379) interacts with Mg(2+).

It belongs to the acetokinase family. As to quaternary structure, homodimer. Mg(2+) serves as cofactor. Mn(2+) is required as a cofactor.

It is found in the cytoplasm. The enzyme catalyses acetate + ATP = acetyl phosphate + ADP. It participates in metabolic intermediate biosynthesis; acetyl-CoA biosynthesis; acetyl-CoA from acetate: step 1/2. Catalyzes the formation of acetyl phosphate from acetate and ATP. Can also catalyze the reverse reaction. The polypeptide is Acetate kinase (Aster yellows witches'-broom phytoplasma (strain AYWB)).